We begin with the raw amino-acid sequence, 258 residues long: UPF0246 protein Asuc_0575 (258 aa).

Belongs to the UPF0246 family.

The protein is UPF0246 protein Asuc_0575 of Actinobacillus succinogenes (strain ATCC 55618 / DSM 22257 / CCUG 43843 / 130Z).